The chain runs to 706 residues: Paxillin-like protein 1 (706 aa).

Disordered regions lie at residues 24–192 (ERAG…EQDL), 222–258 (VLDQKLGKEQQKEESSIEYESEGQQEDENDIESLNFE), 279–341 (AKQE…TKVE), and 514–537 (IDNSKSNDSHVLPNGGTTRYSSDA). Residues 35 to 64 (PFSSQRNASTGSLQASVKSPPITRQRNVSA) are compositionally biased toward polar residues. Residues Ser43 and Ser63 each carry the phosphoserine modification. Composition is skewed to low complexity over residues 73 to 86 (KSAYTASSKSAYSS) and 117 to 129 (SSRPSDISRSISR). 2 stretches are compositionally biased toward basic and acidic residues: residues 130–150 (PSERASQEDPFRFERDLDRQA) and 222–236 (VLDQKLGKEQQKEES). The segment covering 237–252 (SIEYESEGQQEDENDI) has biased composition (acidic residues). The span at 279–290 (AKQEEKNTEPKI) shows a compositional bias: basic and acidic residues. The span at 296–308 (TRESNTPSLTMNA) shows a compositional bias: polar residues. LIM zinc-binding domains follow at residues 556–612 (CRAC…CQKH) and 621–672 (CKVC…CGNH).

The protein is Paxillin-like protein 1 (PXL1) of Saccharomyces cerevisiae (strain ATCC 204508 / S288c) (Baker's yeast).